Reading from the N-terminus, the 391-residue chain is Probable inactive allantoicase (391 aa).

It belongs to the allantoicase family.

In terms of biological role, the function of this enzyme is unclear as allantoicase activity is not known to exist in mammals. This Homo sapiens (Human) protein is Probable inactive allantoicase.